The primary structure comprises 172 residues: Transmembrane protein 91 (172 aa).

Disordered stretches follow at residues 1-31 and 55-83; these read MDSPSLRELQQPLLEGTECETPAQKPGRHEL and PSVSAGLGEPRPPDVEDMSSSDSDSDWDG. Residues 1-97 are Extracellular-facing; sequence MDSPSLRELQ…SPFLPHDHLG (97 aa). Residues 69-81 are compositionally biased toward acidic residues; sequence VEDMSSSDSDSDW. Residues 98–118 form a helical membrane-spanning segment; that stretch reads LAVFSMLCCFWPVGIAAFCLA. The Cytoplasmic segment spans residues 119 to 139; sequence QKTNKAWAKGDIQGAGAASRR. Residues 140–160 form a helical membrane-spanning segment; the sequence is AFLLGVLAVGLGVCTYAAALV. The Extracellular segment spans residues 161–172; it reads TLAAYLASRDPP.

The protein belongs to the CD225/Dispanin family.

It is found in the membrane. The polypeptide is Transmembrane protein 91 (TMEM91) (Homo sapiens (Human)).